Here is a 460-residue protein sequence, read N- to C-terminus: ATP synthase subunit beta (460 aa).

Residue 150–157 participates in ATP binding; the sequence is GGAGVGKT.

Belongs to the ATPase alpha/beta chains family. F-type ATPases have 2 components, CF(1) - the catalytic core - and CF(0) - the membrane proton channel. CF(1) has five subunits: alpha(3), beta(3), gamma(1), delta(1), epsilon(1). CF(0) has three main subunits: a(1), b(2) and c(9-12). The alpha and beta chains form an alternating ring which encloses part of the gamma chain. CF(1) is attached to CF(0) by a central stalk formed by the gamma and epsilon chains, while a peripheral stalk is formed by the delta and b chains.

It localises to the cell inner membrane. It catalyses the reaction ATP + H2O + 4 H(+)(in) = ADP + phosphate + 5 H(+)(out). Functionally, produces ATP from ADP in the presence of a proton gradient across the membrane. The catalytic sites are hosted primarily by the beta subunits. The sequence is that of ATP synthase subunit beta from Enterobacter sp. (strain 638).